A 189-amino-acid polypeptide reads, in one-letter code: Peptidyl-tRNA hydrolase (189 aa).

Y14 is a tRNA binding site. H19 acts as the Proton acceptor in catalysis. The tRNA site is built by Y64, N66, and N112.

The protein belongs to the PTH family. Monomer.

The protein resides in the cytoplasm. The enzyme catalyses an N-acyl-L-alpha-aminoacyl-tRNA + H2O = an N-acyl-L-amino acid + a tRNA + H(+). Functionally, hydrolyzes ribosome-free peptidyl-tRNAs (with 1 or more amino acids incorporated), which drop off the ribosome during protein synthesis, or as a result of ribosome stalling. Catalyzes the release of premature peptidyl moieties from peptidyl-tRNA molecules trapped in stalled 50S ribosomal subunits, and thus maintains levels of free tRNAs and 50S ribosomes. The protein is Peptidyl-tRNA hydrolase of Clostridium botulinum (strain Kyoto / Type A2).